Here is a 281-residue protein sequence, read N- to C-terminus: Cell growth regulator with EF hand domain protein 1 (281 aa).

An N-terminal signal peptide occupies residues 1–21 (MSRWLMQMLMLPLLLLPLGQA). 2 EF-hand domains span residues 71-106 (NREQ…ALAP) and 115-150 (PVIL…APKR). Ca(2+) contacts are provided by aspartate 84, aspartate 86, asparagine 88, glutamine 90, glutamate 95, aspartate 128, aspartate 130, aspartate 132, and glutamate 139. Positions 146-281 (EAPKRAESLP…HSIQLENDEI (136 aa)) are disordered. The span at 169 to 184 (LLANSPLQSETQQSLG) shows a compositional bias: polar residues. Residues 185 to 213 (TKEEITSQVEAKRALEPEQEAGHHIETKV) show a composition bias toward basic and acidic residues. 2 positions are modified to phosphoserine: serine 217 and serine 228. A compositionally biased stretch (basic and acidic residues) spans 234–256 (GPREDAERQVESKDNEGEAKDLP).

Probably digested extracellularly by an unknown serine protease generating extremely hydrophobic bioactive peptides. Expressed predominantly in whole brain and kidney, with limited expression in heart, lung, liver, and skeletal muscle and no expression in spleen and testis. Also expressed in pituitary gland, adrenal gland, digestive tract, and reproductive organs.

It is found in the secreted. In terms of biological role, mediates cell-cell adhesion in a calcium-dependent manner. Able to inhibit growth in several cell lines. The protein is Cell growth regulator with EF hand domain protein 1 of Rattus norvegicus (Rat).